Consider the following 460-residue polypeptide: Ankyrin repeat and MYND domain-containing protein 2 (460 aa).

ANK repeat units lie at residues 45 to 74 (HGMT…DVNC), 79 to 108 (HGYT…ETDV), and 159 to 188 (KLAG…NPLL). 8 residues coordinate Zn(2+): C320, C323, C332, C335, C341, C345, H353, and C357. The MYND-type zinc-finger motif lies at 320–357 (CTTCGEKGADKRCSVCKVVMYCDQNCQKTHWFTHKKVC). Basic and acidic residues-rich tracts occupy residues 371–387 (AAKE…KDEA) and 425–436 (ELTKEPEARAPR). A disordered region spans residues 371–460 (AAKEKRRQEK…ALQKIQDSEE (90 aa)).

It is found in the cell projection. It localises to the cilium. May be involved in the trafficking of signaling proteins to the cilia. In Gallus gallus (Chicken), this protein is Ankyrin repeat and MYND domain-containing protein 2 (ANKMY2).